We begin with the raw amino-acid sequence, 449 residues long: Protein adenylyltransferase FICD (449 aa).

A helical transmembrane segment spans residues 15–35 (LLWGWGPILFGLLGSVFVLLL). 2 TPR repeats span residues 96–129 (AKAA…NPEF) and 130–163 (VEAL…SPCH). The Inhibitory (S/T)XXXE(G/N) motif motif lies at 220 to 225 (TVAIEG). Residues glutamate 224, 250–251 (EQ), 358–360 (GNG), and arginine 364 each bind ATP. Positions 275–410 (ITVNDILEIH…VRPFIRFIAK (136 aa)) constitute a Fido domain.

The protein belongs to the fic family.

Its subcellular location is the membrane. The enzyme catalyses L-tyrosyl-[protein] + ATP = O-(5'-adenylyl)-L-tyrosyl-[protein] + diphosphate. It carries out the reaction L-threonyl-[protein] + ATP = 3-O-(5'-adenylyl)-L-threonyl-[protein] + diphosphate. Adenylyltransferase activity is inhibited by the inhibitory helix present at the N-terminus: Glu-224 binds ATP and competes with ATP-binding at Arg-364, thereby preventing adenylyltransferase activity. Activation dissociates ATP-binding from Glu-224, allowing ordered binding of the entire ATP moiety with the alpha-phosphate in an orientation that is productive for accepting an incoming target hydroxyl side chain. Functionally, adenylyltransferase that mediates the addition of adenosine 5'-monophosphate (AMP) to specific residues of target proteins. The protein is Protein adenylyltransferase FICD (ficd) of Danio rerio (Zebrafish).